The following is a 74-amino-acid chain: U4-theraphotoxin-Cg1a (74 aa).

The signal sequence occupies residues 1 to 19 (MNATIFALLLLLNLAMHNA). Positions 20–39 (AEQSSETDMDDTLLIPEINR) are excised as a propeptide. 3 disulfide bridges follow: Cys42–Cys56, Cys49–Cys61, and Cys55–Cys71.

The protein belongs to the neurotoxin 36 family. 01 subfamily. As to expression, expressed by the venom gland.

The protein localises to the secreted. Functionally, probable ion channel inhibitor. The polypeptide is U4-theraphotoxin-Cg1a (Chilobrachys guangxiensis (Chinese earth tiger tarantula)).